Consider the following 1507-residue polypeptide: Protein similar (1507 aa).

Residues Met1–Arg85 form a disordered region. Residues Ser26 to Ser49 are compositionally biased toward low complexity. Basic and acidic residues predominate over residues Lys72–Arg85. The bHLH domain maps to Lys72–Arg125. PAS domains follow at residues Asn167–Lys240 and Pro307–Gly377. Residues Thr381 to Leu422 form the PAC domain. 4 disordered regions span residues Gln433–Asp459, His541–Thr588, Thr706–Asn832, and Tyr900–Val951. Positions Glu439–Asp459 are enriched in basic and acidic residues. Residues Ile548–Gly559 show a composition bias toward polar residues. Residues Ser578 to Thr588 are compositionally biased toward pro residues. An ODD region spans residues Thr692–Glu863. Residues Thr706–Gln717 show a composition bias toward polar residues. 2 stretches are compositionally biased toward low complexity: residues Ser718–Leu745 and Ser754–His777. The span at Asp803–Lys818 shows a compositional bias: polar residues. 3 stretches are compositionally biased toward low complexity: residues Ser823–Asn832, Gln907–Gln918, and Ser926–Val951. The stretch at Lys880–Gln908 forms a coiled coil. 2 coiled-coil regions span residues Ala982–Gln1054 and Gln1110–Gln1162. Disordered stretches follow at residues Pro1204–Lys1228, Lys1251–Ser1287, and Phe1356–Ile1460. Positions Ser1413–Glu1423 are enriched in polar residues.

In terms of assembly, efficient DNA binding requires dimerization with another bHLH protein. Interacts with Vhl. As to expression, ubiquitously expressed in the embryo.

Its subcellular location is the cytoplasm. It localises to the nucleus. Its function is as follows. Functions as a transcriptional regulator of the adaptive response to hypoxia. Binds to core DNA sequence 5'-[AG]CGTG-3' within the hypoxia response element (HRE) of target gene promoters. The chain is Protein similar (sima) from Drosophila melanogaster (Fruit fly).